The chain runs to 368 residues: Probable magnesium transporter (368 aa).

The Extracellular segment spans residues 1–4; it reads MEDK. A helical membrane pass occupies residues 5 to 25; that stretch reads YIGLALAMSSSLAIGTSFIIT. Topologically, residues 26 to 50 are cytoplasmic; sequence KKGLMDASARTGGTDGVQASDYLQN. The helical transmembrane segment at 51–71 threads the bilayer; sequence PIWWGGMITMAIGEIANFAAY. The Extracellular portion of the chain corresponds to 72–76; the sequence is TFAPA. Residues 77-97 traverse the membrane as a helical segment; sequence ILVTPLGALSVIIGAVLAAIF. At 98–101 the chain is on the cytoplasmic side; sequence LKER. A helical membrane pass occupies residues 102-122; that stretch reads LGTLGKMGCAICLMGSVIIIL. Topologically, residues 123-143 are extracellular; the sequence is HAPPDKEVQTVDEILGYATQP. Residues 144 to 164 form a helical membrane-spanning segment; that stretch reads GFMFYCTVVTLYSLFMIYKIV. The Cytoplasmic segment spans residues 165–175; the sequence is PKYGNTNPMIY. The chain crosses the membrane as a helical span at residues 176–196; it reads LSICSSVGSISVMSIKAFGIA. The Extracellular portion of the chain corresponds to 197–206; it reads LKLTLGGNNQ. The chain crosses the membrane as a helical span at residues 207–227; the sequence is FTHVSTYLFLIVVALCIVTQM. The Cytoplasmic segment spans residues 228–240; sequence NYFNKALDQFDTS. The chain crosses the membrane as a helical span at residues 241–261; it reads IVNPLYYVTFTTFTLAASFIL. Over 262–269 the chain is Extracellular; it reads FKGFNTSS. The N-linked (GlcNAc...) asparagine glycan is linked to N266. The chain crosses the membrane as a helical span at residues 270–290; it reads AVDIISLLIGFLIIFSGVYLL. Topologically, residues 291 to 368 are cytoplasmic; sequence NISRSESPMV…GDEDTRNYRH (78 aa).

The protein belongs to the NIPA family.

Its subcellular location is the cell membrane. The protein resides in the early endosome. It carries out the reaction Mg(2+)(in) = Mg(2+)(out). Its function is as follows. Probably acts as a selective Mg(2+) transporter. Plays a role in cell wall integrity and in engulfment by host macrophages. This is Probable magnesium transporter from Candida albicans (strain SC5314 / ATCC MYA-2876) (Yeast).